We begin with the raw amino-acid sequence, 662 residues long: DNA topoisomerase 4 subunit B (662 aa).

ATP is bound by residues tyrosine 20, asparagine 60, aspartate 87, 129–135 (GLHGVGV), and lysine 359. Residues 439 to 553 (TELFIVEGDS…DGHLYLAKPP (115 aa)) form the Toprim domain. The Mg(2+) site is built by glutamate 445, aspartate 518, and aspartate 520.

It belongs to the type II topoisomerase family. ParE type 1 subfamily. In terms of assembly, heterotetramer composed of ParC and ParE. Mg(2+) serves as cofactor. It depends on Mn(2+) as a cofactor. Requires Ca(2+) as cofactor.

The catalysed reaction is ATP-dependent breakage, passage and rejoining of double-stranded DNA.. In terms of biological role, topoisomerase IV is essential for chromosome segregation. It relaxes supercoiled DNA. Performs the decatenation events required during the replication of a circular DNA molecule. This is DNA topoisomerase 4 subunit B from Rickettsia bellii (strain RML369-C).